Reading from the N-terminus, the 492-residue chain is N-succinylglutamate 5-semialdehyde dehydrogenase (492 aa).

220-225 (GSAGTG) is an NAD(+) binding site. Catalysis depends on residues Glu-243 and Cys-277.

The protein belongs to the aldehyde dehydrogenase family. AstD subfamily.

It catalyses the reaction N-succinyl-L-glutamate 5-semialdehyde + NAD(+) + H2O = N-succinyl-L-glutamate + NADH + 2 H(+). Its pathway is amino-acid degradation; L-arginine degradation via AST pathway; L-glutamate and succinate from L-arginine: step 4/5. Functionally, catalyzes the NAD-dependent reduction of succinylglutamate semialdehyde into succinylglutamate. In Cronobacter sakazakii (strain ATCC BAA-894) (Enterobacter sakazakii), this protein is N-succinylglutamate 5-semialdehyde dehydrogenase.